The following is a 211-amino-acid chain: N-(5'-phosphoribosyl)anthranilate isomerase (211 aa).

Belongs to the TrpF family.

It carries out the reaction N-(5-phospho-beta-D-ribosyl)anthranilate = 1-(2-carboxyphenylamino)-1-deoxy-D-ribulose 5-phosphate. Its pathway is amino-acid biosynthesis; L-tryptophan biosynthesis; L-tryptophan from chorismate: step 3/5. This chain is N-(5'-phosphoribosyl)anthranilate isomerase, found in Methanococcus maripaludis (strain DSM 14266 / JCM 13030 / NBRC 101832 / S2 / LL).